The primary structure comprises 554 residues: Cytochrome c oxidase subunit 1-alpha (554 aa).

Residues 26 to 56 (KDIGVLYLFTAGLAGLISVTLTVYMRMELQH) form a helical membrane-spanning segment. The cysteines at positions 63 and 77 are disulfide-linked. A run of 6 helical transmembrane segments spans residues 81–118 (AHLW…LHIG), 127–148 (LNNL…SLLS), 175–203 (AMDL…TFLN), 215–248 (PLFA…DRNF), 260–295 (DPVL…STFA), and 301–319 (GYLP…GFIV). Position 91 (histidine 91) interacts with Fe(II)-heme a. The Cu cation site is built by histidine 273 and tyrosine 277. The 1'-histidyl-3'-tyrosine (His-Tyr) cross-link spans 273–277 (HPEVY). Cu cation-binding residues include histidine 322 and histidine 323. A run of 5 helical transmembrane segments spans residues 331–359 (LTQQ…IATM), 367–390 (KTPM…VIAQ), 399–425 (DTYY…GTYY), 436–463 (PEWA…FLGR), and 478–508 (SYWN…TLFA). Histidine 406 is a heme a3 binding site. A Fe(II)-heme a-binding site is contributed by histidine 408.

Belongs to the heme-copper respiratory oxidase family. Cu(2+) is required as a cofactor. The cofactor is heme.

It is found in the cell inner membrane. It carries out the reaction 4 Fe(II)-[cytochrome c] + O2 + 8 H(+)(in) = 4 Fe(III)-[cytochrome c] + 2 H2O + 4 H(+)(out). The protein operates within energy metabolism; oxidative phosphorylation. Its function is as follows. Subunit I and II form the functional core of the enzyme complex. Electrons originating in cytochrome c are transferred via heme a and Cu(A) to the binuclear center formed by heme a3 and Cu(B). This cytochrome c oxidase shows proton pump activity across the membrane in addition to the electron transfer. The polypeptide is Cytochrome c oxidase subunit 1-alpha (ctaDI) (Paracoccus denitrificans).